The chain runs to 326 residues: Metallophosphoesterase domain-containing protein 1 (326 aa).

This sequence belongs to the UPF0046 family. As to expression, expressed predominantly in adult brain.

May have metallophosphoesterase activity (in vitro). In Homo sapiens (Human), this protein is Metallophosphoesterase domain-containing protein 1 (MPPED1).